Consider the following 304-residue polypeptide: UTP--glucose-1-phosphate uridylyltransferase 1 (304 aa).

It belongs to the UDPGP type 2 family.

It catalyses the reaction alpha-D-glucose 1-phosphate + UTP + H(+) = UDP-alpha-D-glucose + diphosphate. It participates in carbohydrate metabolism; nucleotide-sugar metabolism. This Streptococcus pyogenes serotype M1 protein is UTP--glucose-1-phosphate uridylyltransferase 1 (hasC1).